Reading from the N-terminus, the 384-residue chain is FAD-dependent urate hydroxylase (384 aa).

FAD-binding positions include glycine 11, 30–31 (EA), serine 43, and valine 125. Substrate contacts are provided by residues asparagine 178, arginine 204, and 216–218 (YFF). FAD-binding positions include aspartate 285 and 295-299 (GQGGC).

It belongs to the FAD-dependent urate hydroxylase family. As to quaternary structure, monomer. FAD serves as cofactor.

It catalyses the reaction urate + NADH + O2 + H(+) = 5-hydroxyisourate + NAD(+) + H2O. Its pathway is purine metabolism; urate degradation. In terms of biological role, catalyzes the hydroxylation of urate to 5-hydroxyisourate (HIU). This chain is FAD-dependent urate hydroxylase, found in Klebsiella pneumoniae subsp. pneumoniae (strain ATCC 700721 / MGH 78578).